The chain runs to 364 residues: MPEVQRMTLTQFLIEERRRYPDASGGFNGLILNVAMACKEIARAVAFGALGGLHGKASTQAGEEGAVNVQGEIQQKLDVLSNTTFLRVNEWGGYLAGMASEEMEAPYQIPENYPRGKYLLVFDPLDGSSNIDVNVSVGSIFSVLRAPEGADTVTEQDFLQPGSAQVAAGYALYGPTTMLVLTVGNGVNGFTLDPNLGEFFLTHPHLRVPPDTQEFAINASNSRFWEAPVQRYIGECMAGKSGPRGKDFNMRWIASMVAEAHRILMRGGVFMYPRDTKDPAKPGRLRLLYEANPIAFLMEQAGGRASTGRQTLMSVAPGALHQRIGVIFGSRNEVERIEGYHTNQTDPDLPSPLFNERSLFRASA.

Mg(2+) contacts are provided by glutamate 101, aspartate 123, leucine 125, and aspartate 126. Substrate-binding positions include 126 to 129 and asparagine 218; that span reads DGSS. Mg(2+) is bound at residue glutamate 290.

Belongs to the FBPase class 1 family. Homotetramer. Mg(2+) serves as cofactor.

Its subcellular location is the cytoplasm. It catalyses the reaction beta-D-fructose 1,6-bisphosphate + H2O = beta-D-fructose 6-phosphate + phosphate. It participates in carbohydrate biosynthesis; gluconeogenesis. The sequence is that of Fructose-1,6-bisphosphatase class 1 3 from Cupriavidus necator (strain ATCC 17699 / DSM 428 / KCTC 22496 / NCIMB 10442 / H16 / Stanier 337) (Ralstonia eutropha).